The primary structure comprises 327 residues: E3 ubiquitin-protein ligase ZNRF4 (327 aa).

The signal sequence occupies residues 1-28 (MARFAWTRVAPVALVTFWLVLSLSPTDA). Over 29 to 150 (QVNLSSVDFL…EPCPDPECHP (122 aa)) the chain is Lumenal. N31 is a glycosylation site (N-linked (GlcNAc...) asparagine). A helical transmembrane segment spans residues 151 to 171 (VVVASWALARALALAASTLFV). The Cytoplasmic segment spans residues 172–327 (LRQLWPWVRG…AQSEATSELS (156 aa)). The RING-type; atypical zinc-finger motif lies at 209–252 (CAICLDDYEEGERLKILPCAHAYHCRCIDPWFSRAAQRSCPLCK). Positions 256-265 (ASTHDGSTDG) are enriched in polar residues. Residues 256–279 (ASTHDGSTDGSVGGEEPPLPGHRP) are disordered.

As to quaternary structure, interacts with CANX. In terms of tissue distribution, expressed exclusively in spermatids (at protein level).

The protein localises to the endoplasmic reticulum membrane. The enzyme catalyses S-ubiquitinyl-[E2 ubiquitin-conjugating enzyme]-L-cysteine + [acceptor protein]-L-lysine = [E2 ubiquitin-conjugating enzyme]-L-cysteine + N(6)-ubiquitinyl-[acceptor protein]-L-lysine.. It participates in protein modification; protein ubiquitination. Its function is as follows. E3 ubiquitin-protein ligase that acts as a negative regulator of NOD2 signaling by mediating ubiquitination and degradation of RIPK2. Also catalyzes ubiquitination and proteasomal degradation of CANX within the endoplasmic reticulum. Could have a role in spermatogenesis. This chain is E3 ubiquitin-protein ligase ZNRF4, found in Mus musculus (Mouse).